The primary structure comprises 250 residues: Envelope glycoprotein L (250 aa).

The N-terminal stretch at 1-18 is a signal peptide; that stretch reads MELLLFVMSLILLTFSKA. Residues 31–239 enclose the gL betaherpesvirus-type domain; the sequence is KLDDCIAAVI…ETYNSKLPFR (209 aa). C136 and C141 are oxidised to a cystine.

This sequence belongs to the herpesviridae glycoprotein L (gL) family. Betaherpesvirinae gL subfamily. Interacts with glycoprotein H (gH); this interaction is necessary for the correct processing and cell surface expression of gH. Part of a gH-gL-gO complex.

It localises to the virion membrane. The protein resides in the host cell membrane. Its subcellular location is the host Golgi apparatus. It is found in the host trans-Golgi network. Functionally, the heterodimer glycoprotein H-glycoprotein L is required for the fusion of viral and plasma membranes leading to virus entry into the host cell. Acts as a functional inhibitor of gH and maintains gH in an inhibited form. Upon binding to host integrins, gL dissociates from gH leading to activation of the viral fusion glycoproteins gB and gH. This is Envelope glycoprotein L from Human herpesvirus 6A (strain Uganda-1102) (HHV-6 variant A).